Consider the following 474-residue polypeptide: MAIRKIIRDLLITKQPLLRQLFHQRVLRANARSEFLPAIGYTSHRRFSVFTEFSKNIRGEAHSNPEFERTVKELKERTEEFKGVTEDLKVRTKQTTEKLYKQADGVWTEAESAAKKVSSSVKDKLSAASEEVKESFKLGKEENAESASSSGTRASQGEKQQSGSTEELHTFFAKFKSSLSSPKVSEVFYRLKEAKPFDIVKQALDIVKDELRGNPSRKKFLEHTPPPPFTGERSMRTEMVVTQTKQSKLQQKWESFREKMQGSPVFKRLSGMSEPVVNKSQEIAEDVREIWETSDNPIVHKIQDMNEKFLKETDSASTYKEIRSRDPSFSLPDFAAEIEEVIKPVLNAYSEGDVETLKKYCSKEVIERCTAERTAYQTHGVLFDNKLLHISEVSVSVTKMMGDSPIIIAKFQTQEIYCVRDENGEIQEGGQDTIHTVYHEWAMQQVETTELGEDAIYPIWRLREMCRNGVQALI.

A mitochondrion-targeting transit peptide spans 1 to 54 (MAIRKIIRDLLITKQPLLRQLFHQRVLRANARSEFLPAIGYTSHRRFSVFTEFS). Residues 68–88 (ERTVKELKERTEEFKGVTEDL) adopt a coiled-coil conformation. Positions 132-143 (VKESFKLGKEEN) are enriched in basic and acidic residues. The interval 132–165 (VKESFKLGKEENAESASSSGTRASQGEKQQSGST) is disordered. Residues 145–165 (ESASSSGTRASQGEKQQSGST) are compositionally biased toward polar residues.

Belongs to the Tim44 family. As to quaternary structure, probable component of the PAM complex at least composed of a mitochondrial HSP70 protein, TIMM44 and TIMM14. The complex interacts with the TIMM23 component of the TIM17:23 complex. Expressed in roots, flowers, young cotyledons and leaves.

It is found in the mitochondrion inner membrane. Its function is as follows. Essential component of the PAM complex, a complex required for the translocation of transit peptide-containing proteins from the inner membrane into the mitochondrial matrix in an ATP-dependent manner. Recruits mitochondrial HSP70 to drive protein translocation into the matrix using ATP as an energy source. The protein is Mitochondrial import inner membrane translocase subunit TIM44-1 (TIM44-1) of Arabidopsis thaliana (Mouse-ear cress).